The sequence spans 197 residues: Beta-crystallin A2 (197 aa).

An N-terminal arm region spans residues methionine 1–proline 11. 2 consecutive Beta/gamma crystallin 'Greek key' domains span residues alanine 12 to asparagine 52 and glycine 53 to leucine 99. A connecting peptide region spans residues cysteine 100–aspartate 105. Beta/gamma crystallin 'Greek key' domains are found at residues serine 106–serine 147 and glycine 148–glutamine 196.

This sequence belongs to the beta/gamma-crystallin family. Homo/heterodimer, or complexes of higher-order. The structure of beta-crystallin oligomers seems to be stabilized through interactions between the N-terminal arms.

In terms of biological role, crystallins are the dominant structural components of the vertebrate eye lens. The chain is Beta-crystallin A2 (CRYBA2) from Oryctolagus cuniculus (Rabbit).